Here is a 512-residue protein sequence, read N- to C-terminus: Centrosomal protein CCDC61 (512 aa).

Position 1 is an N-acetylmethionine (methionine 1). The tract at residues 1-142 is head domain; sequence MEQPAGLQVD…PLPLPYQGKP (142 aa). Coiled coils occupy residues 176–203 and 246–273; these read WHLREQVTRLASEKRELEAQLGRSREEA and RRLAKELEEVKASERNLRARLKTLNCEL. Residue threonine 282 is modified to Phosphothreonine. Disordered stretches follow at residues 282 to 415 and 430 to 472; these read TLPA…SFRS and SQSV…HLAS. A compositionally biased stretch (basic and acidic residues) spans 287–300; it reads AREDRALSSRERST. Serine 328, serine 330, serine 372, and serine 375 each carry phosphoserine. Low complexity predominate over residues 406–415; sequence RSSSVDSFRS. Serine 447 and serine 473 each carry phosphoserine.

Belongs to the CCDC61 family. As to quaternary structure, forms homodimers (via head domain). Interacts with CEP170. Interacts with PCM1 and CEP131. Binds tubulin.

The protein localises to the cytoplasm. It localises to the cytoskeleton. Its subcellular location is the microtubule organizing center. The protein resides in the centrosome. It is found in the centriolar satellite. The protein localises to the cilium basal body. In terms of biological role, microtubule-binding centrosomal protein required for centriole cohesion, independently of the centrosome-associated protein/CEP250 and rootletin/CROCC linker. In interphase, required for anchoring microtubule at the mother centriole subdistal appendages and for centrosome positioning. During mitosis, may be involved in spindle assembly and chromatin alignment by regulating the organization of spindle microtubules into a symmetrical structure. Plays a non-essential role in ciliogenesis. The sequence is that of Centrosomal protein CCDC61 from Rattus norvegicus (Rat).